A 633-amino-acid chain; its full sequence is Glutamyl-tRNA(Gln) amidotransferase subunit E (633 aa).

Belongs to the GatB/GatE family. GatE subfamily. As to quaternary structure, heterodimer of GatD and GatE.

The catalysed reaction is L-glutamyl-tRNA(Gln) + L-glutamine + ATP + H2O = L-glutaminyl-tRNA(Gln) + L-glutamate + ADP + phosphate + H(+). Its function is as follows. Allows the formation of correctly charged Gln-tRNA(Gln) through the transamidation of misacylated Glu-tRNA(Gln) in organisms which lack glutaminyl-tRNA synthetase. The reaction takes place in the presence of glutamine and ATP through an activated gamma-phospho-Glu-tRNA(Gln). The GatDE system is specific for glutamate and does not act on aspartate. In Methanococcus vannielii (strain ATCC 35089 / DSM 1224 / JCM 13029 / OCM 148 / SB), this protein is Glutamyl-tRNA(Gln) amidotransferase subunit E.